A 330-amino-acid chain; its full sequence is Protein IN CHLOROPLAST ATPASE BIOGENESIS, chloroplastic (330 aa).

The N-terminal 35 residues, 1 to 35, are a transit peptide targeting the chloroplast; it reads MGSISMHITPSTALPIRHFRARVSCCSSGHVSFIK.

In terms of assembly, interacts with ATPC1.

It is found in the plastid. Its subcellular location is the chloroplast stroma. Involved in the assembly of the F(1) ATP synthase in chloroplast thylakoid membranes. Functions downstream of the CPN60 chaperones to promote assembly of the catalytically active core of the chloroplast ATP synthase. Assists the assembly of the ATP synthase gamma subunit into the active F(1) core downstream of CPN60-mediated folding, which is critical for the biogenesis of the chloroplast ATP synthase. The sequence is that of Protein IN CHLOROPLAST ATPASE BIOGENESIS, chloroplastic from Arabidopsis thaliana (Mouse-ear cress).